We begin with the raw amino-acid sequence, 192 residues long: Nucleoside triphosphate pyrophosphatase (192 aa).

Catalysis depends on Asp-73, which acts as the Proton acceptor.

The protein belongs to the Maf family. The cofactor is a divalent metal cation.

Its subcellular location is the cytoplasm. It catalyses the reaction a ribonucleoside 5'-triphosphate + H2O = a ribonucleoside 5'-phosphate + diphosphate + H(+). It carries out the reaction a 2'-deoxyribonucleoside 5'-triphosphate + H2O = a 2'-deoxyribonucleoside 5'-phosphate + diphosphate + H(+). Its function is as follows. Nucleoside triphosphate pyrophosphatase. May have a dual role in cell division arrest and in preventing the incorporation of modified nucleotides into cellular nucleic acids. The sequence is that of Nucleoside triphosphate pyrophosphatase from Ehrlichia ruminantium (strain Welgevonden).